The following is a 122-amino-acid chain: Large ribosomal subunit protein uL14 (122 aa).

The protein belongs to the universal ribosomal protein uL14 family. Part of the 50S ribosomal subunit. Forms a cluster with proteins L3 and L19. In the 70S ribosome, L14 and L19 interact and together make contacts with the 16S rRNA in bridges B5 and B8.

Its function is as follows. Binds to 23S rRNA. Forms part of two intersubunit bridges in the 70S ribosome. This Azorhizobium caulinodans (strain ATCC 43989 / DSM 5975 / JCM 20966 / LMG 6465 / NBRC 14845 / NCIMB 13405 / ORS 571) protein is Large ribosomal subunit protein uL14.